The chain runs to 512 residues: DNA damage-binding protein CMR1 (512 aa).

Positions serine 32–leucine 96 are disordered. Positions isoleucine 34–aspartate 46 are enriched in basic and acidic residues. Positions arginine 47–valine 60 are enriched in basic residues. WD repeat units follow at residues leucine 189–glutamate 230, leucine 241–isoleucine 281, aspartate 289–asparagine 329, leucine 333–glutamate 373, aspartate 390–leucine 429, glycine 442–leucine 481, and proline 482–threonine 512.

The protein belongs to the WD repeat DDB2/WDR76 family.

Its function is as follows. DNA-binding protein that binds to both single- and double-stranded DNA. Binds preferentially to UV-damaged DNA. May be involved in DNA-metabolic processes. The chain is DNA damage-binding protein CMR1 from Kluyveromyces lactis (strain ATCC 8585 / CBS 2359 / DSM 70799 / NBRC 1267 / NRRL Y-1140 / WM37) (Yeast).